Consider the following 152-residue polypeptide: Aspartate carbamoyltransferase regulatory chain (152 aa).

Zn(2+) is bound by residues Cys108, Cys113, Cys136, and Cys139.

It belongs to the PyrI family. In terms of assembly, contains catalytic and regulatory chains. Zn(2+) serves as cofactor.

Involved in allosteric regulation of aspartate carbamoyltransferase. In Pyrococcus furiosus (strain ATCC 43587 / DSM 3638 / JCM 8422 / Vc1), this protein is Aspartate carbamoyltransferase regulatory chain.